Reading from the N-terminus, the 316-residue chain is Transaldolase (316 aa).

Lysine 132 functions as the Schiff-base intermediate with substrate in the catalytic mechanism.

It belongs to the transaldolase family. Type 1 subfamily. As to quaternary structure, homodimer.

The protein resides in the cytoplasm. It catalyses the reaction D-sedoheptulose 7-phosphate + D-glyceraldehyde 3-phosphate = D-erythrose 4-phosphate + beta-D-fructose 6-phosphate. The protein operates within carbohydrate degradation; pentose phosphate pathway; D-glyceraldehyde 3-phosphate and beta-D-fructose 6-phosphate from D-ribose 5-phosphate and D-xylulose 5-phosphate (non-oxidative stage): step 2/3. Its function is as follows. Transaldolase is important for the balance of metabolites in the pentose-phosphate pathway. The protein is Transaldolase of Aliivibrio fischeri (strain MJ11) (Vibrio fischeri).